Consider the following 127-residue polypeptide: Fluoride-specific ion channel FluC (127 aa).

4 helical membrane-spanning segments follow: residues 4–24 (TLLAVFIGGGVGSVARWQLGV), 35–55 (LGTLLANLIGAFVIGGALAFF), 71–91 (TGLCGGLTTFSTFSAEVIMFL), and 103–123 (VLLNLAGSLLMTALAFALVTW). Residues glycine 75 and threonine 78 each coordinate Na(+).

This sequence belongs to the fluoride channel Fluc/FEX (TC 1.A.43) family.

It localises to the cell inner membrane. The catalysed reaction is fluoride(in) = fluoride(out). Its activity is regulated as follows. Na(+) is not transported, but it plays an essential structural role and its presence is essential for fluoride channel function. Fluoride-specific ion channel. Important for reducing fluoride concentration in the cell, thus reducing its toxicity. The chain is Fluoride-specific ion channel FluC from Pectobacterium carotovorum subsp. carotovorum (strain PC1).